Consider the following 171-residue polypeptide: Ribosome maturation factor RimM (171 aa).

One can recognise a PRC barrel domain in the interval 97–170 (EGEYYYHEII…LVTIHVMEGL (74 aa)).

This sequence belongs to the RimM family. In terms of assembly, binds ribosomal protein uS19.

It localises to the cytoplasm. Functionally, an accessory protein needed during the final step in the assembly of 30S ribosomal subunit, possibly for assembly of the head region. Essential for efficient processing of 16S rRNA. May be needed both before and after RbfA during the maturation of 16S rRNA. It has affinity for free ribosomal 30S subunits but not for 70S ribosomes. The polypeptide is Ribosome maturation factor RimM (Bacillus cereus (strain ATCC 14579 / DSM 31 / CCUG 7414 / JCM 2152 / NBRC 15305 / NCIMB 9373 / NCTC 2599 / NRRL B-3711)).